A 931-amino-acid chain; its full sequence is Elicitor of plant defense protein 1 (931 aa).

A disordered region spans residues 13 to 32; the sequence is NYNSVIPPPEPLNTDPDMHP. A uDENN domain is found at 19-277; the sequence is PPPEPLNTDP…NLCTEAFNPL (259 aa). The 133-residue stretch at 301 to 433 folds into the cDENN domain; sequence EIPGSRSIDL…ARRKLMSLLQ (133 aa). A dDENN domain is found at 435 to 799; it reads AAPHKLRYGV…DREMQPANNA (365 aa). 2 disordered regions span residues 478 to 552 and 566 to 586; these read LGKW…SRSD and SGHF…DKHP. Residues 521–537 show a composition bias toward polar residues; that stretch reads TSKSGKTSPQSSVSPVS. The segment covering 566-575 has biased composition (basic and acidic residues); the sequence is SGHFGEEKMR. The segment at 666–714 adopts a Phorbol-ester/DAG-type zinc-finger fold; sequence GHCFNWIPKDNTSICNICNDHAEGDGIYKCTGCKIFSHGRCLGHASLVC.

Belongs to the EPD1 elicitor family.

The protein localises to the secreted. Its subcellular location is the host cell. In terms of biological role, acts as an elicitor that triggers cell death and defense responses in the host plants. This chain is Elicitor of plant defense protein 1, found in Fusarium odoratissimum (strain NRRL 54006).